Here is a 227-residue protein sequence, read N- to C-terminus: Enolase-phosphatase E1 (227 aa).

2 residues coordinate Mg(2+): Asp11 and Glu13. Substrate is bound by residues 118–119 and Lys161; that span reads SS. Asp186 contributes to the Mg(2+) binding site.

The protein belongs to the HAD-like hydrolase superfamily. MasA/MtnC family. Monomer. Mg(2+) serves as cofactor.

It is found in the cytoplasm. The protein localises to the nucleus. It catalyses the reaction 5-methylsulfanyl-2,3-dioxopentyl phosphate + H2O = 1,2-dihydroxy-5-(methylsulfanyl)pent-1-en-3-one + phosphate. The protein operates within amino-acid biosynthesis; L-methionine biosynthesis via salvage pathway; L-methionine from S-methyl-5-thio-alpha-D-ribose 1-phosphate: step 3/6. It functions in the pathway amino-acid biosynthesis; L-methionine biosynthesis via salvage pathway; L-methionine from S-methyl-5-thio-alpha-D-ribose 1-phosphate: step 4/6. In terms of biological role, bifunctional enzyme that catalyzes the enolization of 2,3-diketo-5-methylthiopentyl-1-phosphate (DK-MTP-1-P) into the intermediate 2-hydroxy-3-keto-5-methylthiopentenyl-1-phosphate (HK-MTPenyl-1-P), which is then dephosphorylated to form the acireductone 1,2-dihydroxy-3-keto-5-methylthiopentene (DHK-MTPene). This Saccharomyces cerevisiae (strain ATCC 204508 / S288c) (Baker's yeast) protein is Enolase-phosphatase E1.